The following is a 392-amino-acid chain: 8-amino-7-oxononanoate synthase (392 aa).

Arginine 21 lines the substrate pocket. 108–109 (GF) serves as a coordination point for pyridoxal 5'-phosphate. Histidine 133 lines the substrate pocket. Pyridoxal 5'-phosphate-binding positions include serine 181, 206-209 (DDAH), and 237-240 (TLSK). N6-(pyridoxal phosphate)lysine is present on lysine 240. Substrate is bound at residue threonine 354.

This sequence belongs to the class-II pyridoxal-phosphate-dependent aminotransferase family. BioF subfamily. In terms of assembly, homodimer. It depends on pyridoxal 5'-phosphate as a cofactor.

The catalysed reaction is 6-carboxyhexanoyl-[ACP] + L-alanine + H(+) = (8S)-8-amino-7-oxononanoate + holo-[ACP] + CO2. Its pathway is cofactor biosynthesis; biotin biosynthesis. Functionally, catalyzes the decarboxylative condensation of pimeloyl-[acyl-carrier protein] and L-alanine to produce 8-amino-7-oxononanoate (AON), [acyl-carrier protein], and carbon dioxide. The polypeptide is 8-amino-7-oxononanoate synthase (Symbiobacterium thermophilum (strain DSM 24528 / JCM 14929 / IAM 14863 / T)).